A 107-amino-acid chain; its full sequence is Metallothionein-1 (107 aa).

The propeptide occupies 1–2; it reads MD.

This sequence belongs to the metallothionein superfamily. Type 7 family.

Functionally, the metallothioneins are involved in the cellular sequestration of toxic metal ions. Binds 12 cadmium ions per molecule. This is Metallothionein-1 from Tetrahymena pyriformis.